We begin with the raw amino-acid sequence, 448 residues long: MLIQRGGLKVVAGLGISGVSAVNFLHEQGYQVAVTDSRPTPPGHDQIPAGVKTSFGQLDQELLLQAEEIILSPGLAPQLPEIQAAIAKGISVVGDIQLLRRATDVPIVAITGSNAKSTVTTLIGLMAKDAGKKVAVGGNLGRPALDLLKDQPELLVLELSSFQLETTSHLNAEVAVVLNMSEDHLDRHGNMLGYHQAKHRIFQGAKKVVFNRDDALSRPLVPDTTPMQSFGLNAPDLNQYGVLRDADGTLWLACGLQRLIKSSDLYIQGMHNVANALACLALGEAIGLPMESMLETLKQFKGLEHRCEYVKTVHDVRYYNDSKGTNVGATLAAIDGLGAAIEVKKGKVALILGGQGKGQDFSPLRSSIEKYAKVVVLIGEDAPVIEQAIQGATKILHAATLKEAVELCQRETQAEDVVLLSPACASFDMFKSYNDRGQQFVACVNSLV.

Residue 112-118 coordinates ATP; it reads GSNAKST.

It belongs to the MurCDEF family.

It localises to the cytoplasm. The enzyme catalyses UDP-N-acetyl-alpha-D-muramoyl-L-alanine + D-glutamate + ATP = UDP-N-acetyl-alpha-D-muramoyl-L-alanyl-D-glutamate + ADP + phosphate + H(+). The protein operates within cell wall biogenesis; peptidoglycan biosynthesis. Its function is as follows. Cell wall formation. Catalyzes the addition of glutamate to the nucleotide precursor UDP-N-acetylmuramoyl-L-alanine (UMA). This is UDP-N-acetylmuramoylalanine--D-glutamate ligase from Acinetobacter baumannii (strain ATCC 17978 / DSM 105126 / CIP 53.77 / LMG 1025 / NCDC KC755 / 5377).